The primary structure comprises 237 residues: Phosphoadenosine 5'-phosphosulfate reductase (237 aa).

Catalysis depends on Cys231, which acts as the Nucleophile; cysteine thiosulfonate intermediate.

The protein belongs to the PAPS reductase family. CysH subfamily.

The protein resides in the cytoplasm. It catalyses the reaction [thioredoxin]-disulfide + sulfite + adenosine 3',5'-bisphosphate + 2 H(+) = [thioredoxin]-dithiol + 3'-phosphoadenylyl sulfate. It functions in the pathway sulfur metabolism; hydrogen sulfide biosynthesis; sulfite from sulfate: step 3/3. Its function is as follows. Catalyzes the formation of sulfite from phosphoadenosine 5'-phosphosulfate (PAPS) using thioredoxin as an electron donor. The protein is Phosphoadenosine 5'-phosphosulfate reductase of Xylella fastidiosa (strain M23).